The primary structure comprises 574 residues: Type II methyltransferase M.PaeR7I (574 aa).

It belongs to the N(4)/N(6)-methyltransferase family. Monomer.

It catalyses the reaction a 2'-deoxyadenosine in DNA + S-adenosyl-L-methionine = an N(6)-methyl-2'-deoxyadenosine in DNA + S-adenosyl-L-homocysteine + H(+). Functionally, a gamma subtype methylase, recognizes the double-stranded sequence 5'-CTCGAG-3', methylates A-5 on both strands, and protects the DNA from cleavage by the PaeR7I endonuclease. This Pseudomonas aeruginosa protein is Type II methyltransferase M.PaeR7I (paeR7IM).